Reading from the N-terminus, the 1032-residue chain is Toll-like receptor 9 (1032 aa).

The signal sequence occupies residues Met-1 to Ala-25. The Extracellular segment spans residues Gln-26–Ala-815. Cys-35 and Cys-45 are oxidised to a cystine. Residue Trp-47 to Lys-51 participates in DNA binding. LRR repeat units follow at residues Arg-62–His-85, Val-87–Cys-110, Val-122–Ser-147, Leu-150–Leu-166, Tyr-167–Val-190, Leu-198–Ser-221, Glu-223–Asn-242, Leu-243–Cys-268, Leu-283–Gly-306, Gly-308–Gly-332, Leu-333–Leu-356, Leu-363–Ser-386, Leu-390–Ala-413, Pro-415–Val-440, Cys-472–Arg-496, Ala-498–Pro-521, Leu-522–Glu-545, Pro-547–Ala-574, Leu-576–Ala-600, Leu-602–Arg-624, Leu-629–Asn-652, Pro-654–Leu-677, Leu-678–Asn-701, Thr-703–Leu-725, Ala-726–Ser-749, and Ala-751–Asp-774. Asn-64 carries an N-linked (GlcNAc...) asparagine glycan. DNA contacts are provided by residues Ser-72–His-77 and Lys-95–Pro-109. A disulfide bridge links Cys-98 with Cys-110. The N-linked (GlcNAc...) asparagine glycan is linked to Asn-129. Residues Tyr-132, Arg-152, and Tyr-179–Lys-181 contribute to the DNA site. Cysteines 178 and 184 form a disulfide. Residue Asn-200 is glycosylated (N-linked (GlcNAc...) asparagine). A DNA-binding site is contributed by Tyr-208. Residues Asn-210 and Asn-242 are each glycosylated (N-linked (GlcNAc...) asparagine). 2 disulfides stabilise this stretch: Cys-255-Cys-268 and Cys-258-Cys-265. Cys-258 is lipidated: S-palmitoyl cysteine. Residue Arg-262 coordinates DNA. The S-palmitoyl cysteine moiety is linked to residue Cys-265. Asn-340 is a glycosylation site (N-linked (GlcNAc...) asparagine). Cys-472 and Cys-502 are joined by a disulfide. 2 N-linked (GlcNAc...) asparagine glycosylation sites follow: Asn-476 and Asn-515. A glycan (N-linked (GlcNAc...) asparagine) is linked at Asn-569. 3 N-linked (GlcNAc...) asparagine glycosylation sites follow: Asn-671, Asn-696, and Asn-701. Asn-733 carries an N-linked (GlcNAc...) asparagine glycan. Cystine bridges form between Cys-766–Cys-792 and Cys-768–Cys-811. The helical transmembrane segment at Leu-816–Met-836 threads the bilayer. Over Leu-837 to Ala-1032 the chain is Cytoplasmic. In terms of domain architecture, TIR spans Leu-868 to Leu-1013.

This sequence belongs to the Toll-like receptor family. Monomer and homodimer. Exists as a monomer in the absence of unmethylated cytidine-phosphate-guanosine (CpG) ligand. Proteolytic processing of an insertion loop (Z-loop) is required for homodimerization upon binding to the unmethylated CpG ligand leading to its activation. Interacts with MYD88 via their respective TIR domains. Interacts with BTK. Interacts (via transmembrane domain) with UNC93B1. Interacts with CD300LH; the interaction may promote full activation of TLR9-triggered innate responses. Interacts with CNPY3 and HSP90B1; this interaction is required for proper folding in the endoplasmic reticulum. Interacts with SMPDL3B. Interacts with CD82; this interaction is essential for TLR9-dependent myddosome formation in response to CpG stimulation. Post-translationally, activated by proteolytic cleavage of the flexible loop between repeats LRR14 and LRR15 within the ectodomain. Cleavage requires UNC93B1. Proteolytically processed by first removing the majority of the ectodomain by either asparagine endopeptidase (AEP) or a cathepsin followed by a trimming event that is solely cathepsin mediated and required for optimal receptor signaling. Palmitoylated by ZDHHC3 in the Golgi regulates TLR9 trafficking from the Golgi to endosomes. Depalmitoylation by PPT1 controls the release of TLR9 from UNC93B1 in endosomes.

It localises to the endoplasmic reticulum membrane. The protein localises to the endosome. Its subcellular location is the lysosome. It is found in the cytoplasmic vesicle. The protein resides in the phagosome. In terms of biological role, key component of innate and adaptive immunity. TLRs (Toll-like receptors) control host immune response against pathogens through recognition of molecular patterns specific to microorganisms. TLR9 is a nucleotide-sensing TLR which is activated by unmethylated cytidine-phosphate-guanosine (CpG) dinucleotides. Acts via MYD88 and TRAF6, leading to NF-kappa-B activation, cytokine secretion and the inflammatory response. Upon CpG stimulation, induces B-cell proliferation, activation, survival and antibody production. The polypeptide is Toll-like receptor 9 (TLR9) (Canis lupus familiaris (Dog)).